The primary structure comprises 254 residues: MRKPLVGINMKNYINTRAQTSEWLEATIPLLENFSDVDTFIFPSMGTLETTANLLAGTSFGFGPQNMAPEKSGPLTGEFSVESIIDLNANYVEIGHAERKNLFHEKTSEIAKKIKLALDEKITPVVCVGEEVHANDTNELKNALKKQIEALFQTINLAQWENVVLAYEPEWAIGKASSAETNYIESAHQALREIIRELGGDETLVRIIYGGSVSKENAAEIVRQKNVDGLFVGRFGHKPQNFADIVSIVSKTKG.

9-11 (NMK) lines the substrate pocket. The Electrophile role is filled by His96. Glu168 (proton acceptor) is an active-site residue. Residues Gly174 and Ser212 each coordinate substrate.

The protein belongs to the triosephosphate isomerase family. In terms of assembly, homodimer.

It localises to the cytoplasm. It catalyses the reaction D-glyceraldehyde 3-phosphate = dihydroxyacetone phosphate. It participates in polyol metabolism; glycerol degradation. In terms of biological role, involved in the glycerol metabolism. Catalyzes stereospecifically the conversion of dihydroxyacetone phosphate (DHAP) to D-glyceraldehyde-3-phosphate (G3P). The protein is Triosephosphate isomerase 2 of Listeria innocua serovar 6a (strain ATCC BAA-680 / CLIP 11262).